The following is a 206-amino-acid chain: D-ribitol-5-phosphate phosphatase (206 aa).

Catalysis depends on Asp-8, which acts as the Nucleophile. The Mg(2+) site is built by Asp-8 and Asp-172.

The protein belongs to the HAD-like hydrolase superfamily. Mg(2+) serves as cofactor.

It catalyses the reaction D-ribitol 1-phosphate + H2O = ribitol + phosphate. It carries out the reaction D-ribitol 5-phosphate + H2O = ribitol + phosphate. The enzyme catalyses 5-amino-6-(5-phospho-D-ribitylamino)uracil + H2O = 5-amino-6-(D-ribitylamino)uracil + phosphate. The protein operates within cofactor biosynthesis; riboflavin biosynthesis; 5-amino-6-(D-ribitylamino)uracil from GTP: step 4/4. Catalyzes the dephosphorylation of D-ribitol-5-phosphate and D-ribitol-1-phosphate. Is also able to dephosphorylate 5-amino-6-(5-phospho-D-ribitylamino)uracil, and thus could be involved in the riboflavin biosynthesis pathway. This Bacteroides thetaiotaomicron (strain ATCC 29148 / DSM 2079 / JCM 5827 / CCUG 10774 / NCTC 10582 / VPI-5482 / E50) protein is D-ribitol-5-phosphate phosphatase.